A 484-amino-acid chain; its full sequence is Transcription factor TGAL4 (484 aa).

The segment covering M1–P11 has biased composition (polar residues). Disordered stretches follow at residues M1–F22, A84–S137, and Q155–T181. The span at S123–S137 shows a compositional bias: low complexity. Polar residues predominate over residues A163–T173. The bZIP domain maps to D178–R222. The basic motif stretch occupies residues K180 to K200. Residues L206–I220 form a leucine-zipper region. The region spanning A241–R455 is the DOG1 domain.

Belongs to the bZIP family. Interacts with NPR1/NH1 and NPR3/NH3.

Its subcellular location is the nucleus. Functionally, transcriptional regulator involved in defense response. The sequence is that of Transcription factor TGAL4 from Oryza sativa subsp. japonica (Rice).